The sequence spans 470 residues: Glutamate--tRNA ligase (470 aa).

The 'HIGH' region motif lies at 12–22 (PSPTGIFHVGG). Zn(2+)-binding residues include cysteine 103, cysteine 105, cysteine 125, and aspartate 127. Residues 236-240 (KLSKR) carry the 'KMSKS' region motif. Residue lysine 239 participates in ATP binding.

It belongs to the class-I aminoacyl-tRNA synthetase family. Glutamate--tRNA ligase type 1 subfamily. As to quaternary structure, monomer. The cofactor is Zn(2+).

It localises to the cytoplasm. It carries out the reaction tRNA(Glu) + L-glutamate + ATP = L-glutamyl-tRNA(Glu) + AMP + diphosphate. Catalyzes the attachment of glutamate to tRNA(Glu) in a two-step reaction: glutamate is first activated by ATP to form Glu-AMP and then transferred to the acceptor end of tRNA(Glu). This is Glutamate--tRNA ligase from Frankia casuarinae (strain DSM 45818 / CECT 9043 / HFP020203 / CcI3).